A 264-amino-acid polypeptide reads, in one-letter code: S-adenosylmethionine decarboxylase proenzyme (264 aa).

Serine 112 (schiff-base intermediate with substrate; via pyruvic acid) is an active-site residue. At serine 112 the chain carries Pyruvic acid (Ser); by autocatalysis. Histidine 117 (proton acceptor; for processing activity) is an active-site residue. The active-site Proton donor; for catalytic activity is the cysteine 140.

It belongs to the prokaryotic AdoMetDC family. Type 2 subfamily. In terms of assembly, heterooctamer of four alpha and four beta chains arranged as a tetramer of alpha/beta heterodimers. The cofactor is pyruvate. In terms of processing, is synthesized initially as an inactive proenzyme. Formation of the active enzyme involves a self-maturation process in which the active site pyruvoyl group is generated from an internal serine residue via an autocatalytic post-translational modification. Two non-identical subunits are generated from the proenzyme in this reaction, and the pyruvate is formed at the N-terminus of the alpha chain, which is derived from the carboxyl end of the proenzyme. The post-translation cleavage follows an unusual pathway, termed non-hydrolytic serinolysis, in which the side chain hydroxyl group of the serine supplies its oxygen atom to form the C-terminus of the beta chain, while the remainder of the serine residue undergoes an oxidative deamination to produce ammonia and the pyruvoyl group blocking the N-terminus of the alpha chain.

It carries out the reaction S-adenosyl-L-methionine + H(+) = S-adenosyl 3-(methylsulfanyl)propylamine + CO2. Its pathway is amine and polyamine biosynthesis; S-adenosylmethioninamine biosynthesis; S-adenosylmethioninamine from S-adenosyl-L-methionine: step 1/1. Its function is as follows. Catalyzes the decarboxylation of S-adenosylmethionine to S-adenosylmethioninamine (dcAdoMet), the propylamine donor required for the synthesis of the polyamines spermine and spermidine from the diamine putrescine. This Shigella boydii serotype 4 (strain Sb227) protein is S-adenosylmethionine decarboxylase proenzyme.